A 231-amino-acid chain; its full sequence is Transmembrane gamma-carboxyglutamic acid protein 3 (231 aa).

Residues 1-19 (MAVFLEAKDAHSVLKRFPR) constitute a propeptide that is removed on maturation. Positions 20-65 (ANEFLEELRQGTIERECMEEICSYEEVKEVFENKEKTMEFWKGYPN) constitute a Gla domain. The Extracellular segment spans residues 20–78 (ANEFLEELRQGTIERECMEEICSYEEVKEVFENKEKTMEFWKGYPNAVYSVRDPSQSSD). 13 positions are modified to 4-carboxyglutamate: glutamate 22, glutamate 25, glutamate 26, glutamate 33, glutamate 35, glutamate 38, glutamate 39, glutamate 44, glutamate 45, glutamate 48, glutamate 51, glutamate 54, and glutamate 58. Cysteine 36 and cysteine 41 are joined by a disulfide. The helical transmembrane segment at 79–101 (AMYVVVPLLGVALLIVIALFIIW) threads the bilayer. The Cytoplasmic segment spans residues 102-231 (RCQLQKATRH…IVAANPGADK (130 aa)). Disordered regions lie at residues 140 to 165 (HSQG…SRGG) and 182 to 231 (LSRL…GADK). Low complexity predominate over residues 202–213 (ESSSEEASVSYS).

Post-translationally, gla residues are produced after subsequent post-translational modifications of glutamate by a vitamin K-dependent gamma-carboxylase. As to expression, expressed in brain, lung, kidney and heart.

Its subcellular location is the membrane. The sequence is that of Transmembrane gamma-carboxyglutamic acid protein 3 (PRRG3) from Homo sapiens (Human).